The chain runs to 602 residues: Laccase 1 (602 aa).

Positions 1–20 (MDHFARVSLVAALLYTNTWA) are cleaved as a signal peptide. Plastocyanin-like domains are found at residues 30-128 (TWEE…VRPK) and 157-345 (YLVV…RIPN). The Cu cation site is built by His78, His80, His108, and His110. N-linked (GlcNAc...) asparagine glycosylation is found at Asn176, Asn241, Asn264, Asn388, Asn430, Asn454, and Asn470. One can recognise a Plastocyanin-like 3 domain in the interval 461–584 (NEGLLLRTRN…GGMGMVIMDG (124 aa)). Cu cation-binding residues include His492, His495, and His497. Asn512 carries N-linked (GlcNAc...) asparagine glycosylation. Cu cation contacts are provided by His566, Cys567, His568, and His572.

The protein belongs to the multicopper oxidase family. Requires Cu cation as cofactor.

The protein resides in the cell surface. It functions in the pathway pigment biosynthesis. Its function is as follows. Laccase; part of the Pks1 gene cluster that mediates the biosynthesis of an anthraquinone derivative pigment that contributes to conidial pigmentation that provides protection from UV radiation, heat and cold stress. The polyketide synthase Pks1 produces 1-acetyl-2,4,6,8-tetrahydroxy-9,10-anthraquinone though condensation of acetyl-CoA with malonyl-CoA. The dehydratase EthD and the laccase Mlac1 further convert the anthraquinone derivative into the final conidial pigment. This chain is Laccase 1, found in Metarhizium album (strain ARSEF 1941).